The primary structure comprises 78 residues: Acyl carrier protein (78 aa).

The Carrier domain occupies 2-77 (SDIAERVKKI…DAVKFIEKAQ (76 aa)). O-(pantetheine 4'-phosphoryl)serine is present on Ser37.

The protein belongs to the acyl carrier protein (ACP) family. 4'-phosphopantetheine is transferred from CoA to a specific serine of apo-ACP by AcpS. This modification is essential for activity because fatty acids are bound in thioester linkage to the sulfhydryl of the prosthetic group.

It is found in the cytoplasm. It participates in lipid metabolism; fatty acid biosynthesis. Its function is as follows. Carrier of the growing fatty acid chain in fatty acid biosynthesis. The sequence is that of Acyl carrier protein from Sinorhizobium fredii (strain NBRC 101917 / NGR234).